Consider the following 646-residue polypeptide: Chaperone protein DnaK (646 aa).

Residue threonine 198 is modified to Phosphothreonine; by autocatalysis. The segment at 603–646 (EQAQQAGGAEGFDPNAFQGGDAGQQKADDGVVDAEFTEVKDDKK) is disordered. The segment covering 618 to 627 (AFQGGDAGQQ) has biased composition (low complexity).

This sequence belongs to the heat shock protein 70 family.

Its function is as follows. Acts as a chaperone. The polypeptide is Chaperone protein DnaK (Acinetobacter baumannii (strain AB307-0294)).